Consider the following 396-residue polypeptide: Methylthioribose kinase (396 aa).

ATP-binding positions include Asn-44, Lys-61, and 115-117 (EDL). Asp-233 is a substrate binding site. Residue 250-252 (DPE) participates in ATP binding. Residue Arg-340 participates in substrate binding.

Belongs to the methylthioribose kinase family. As to quaternary structure, homodimer.

The enzyme catalyses 5-(methylsulfanyl)-D-ribose + ATP = 5-(methylsulfanyl)-alpha-D-ribose 1-phosphate + ADP + H(+). It functions in the pathway amino-acid biosynthesis; L-methionine biosynthesis via salvage pathway; S-methyl-5-thio-alpha-D-ribose 1-phosphate from S-methyl-5'-thioadenosine (hydrolase route): step 2/2. In terms of biological role, catalyzes the phosphorylation of methylthioribose into methylthioribose-1-phosphate. In Geobacillus kaustophilus (strain HTA426), this protein is Methylthioribose kinase.